The chain runs to 388 residues: Succinate--CoA ligase [ADP-forming] subunit beta (388 aa).

The region spanning 9–244 is the ATP-grasp domain; it reads KQLFAEYGLP…PSQDDPREAH (236 aa). Residues Lys46, 53–55, Glu99, Thr102, and Glu107 each bind ATP; that span reads GRG. Residues Asn199 and Asp213 each coordinate Mg(2+). Substrate-binding positions include Asn264 and 321-323; that span reads GIV.

The protein belongs to the succinate/malate CoA ligase beta subunit family. Heterotetramer of two alpha and two beta subunits. It depends on Mg(2+) as a cofactor.

It catalyses the reaction succinate + ATP + CoA = succinyl-CoA + ADP + phosphate. The enzyme catalyses GTP + succinate + CoA = succinyl-CoA + GDP + phosphate. It participates in carbohydrate metabolism; tricarboxylic acid cycle; succinate from succinyl-CoA (ligase route): step 1/1. Functionally, succinyl-CoA synthetase functions in the citric acid cycle (TCA), coupling the hydrolysis of succinyl-CoA to the synthesis of either ATP or GTP and thus represents the only step of substrate-level phosphorylation in the TCA. The beta subunit provides nucleotide specificity of the enzyme and binds the substrate succinate, while the binding sites for coenzyme A and phosphate are found in the alpha subunit. The protein is Succinate--CoA ligase [ADP-forming] subunit beta of Pseudomonas fluorescens (strain SBW25).